Consider the following 308-residue polypeptide: Ribosomal RNA small subunit methyltransferase H (308 aa).

Residues 46–48 (AGH), Asp63, Tyr87, Asp108, and Gln115 each bind S-adenosyl-L-methionine. The disordered stretch occupies residues 269 to 308 (TKRPVEASEEERGRNPRARSAKLRAAEKVAAPEGLPEVEV). Positions 271–282 (RPVEASEEERGR) are enriched in basic and acidic residues.

Belongs to the methyltransferase superfamily. RsmH family.

Its subcellular location is the cytoplasm. The catalysed reaction is cytidine(1402) in 16S rRNA + S-adenosyl-L-methionine = N(4)-methylcytidine(1402) in 16S rRNA + S-adenosyl-L-homocysteine + H(+). Its function is as follows. Specifically methylates the N4 position of cytidine in position 1402 (C1402) of 16S rRNA. This Deinococcus geothermalis (strain DSM 11300 / CIP 105573 / AG-3a) protein is Ribosomal RNA small subunit methyltransferase H.